A 711-amino-acid chain; its full sequence is DNA topoisomerase 3 (711 aa).

Residues 2 to 135 enclose the Toprim domain; sequence KSLILAEKPS…IKRLWISSVT (134 aa). Positions 8 and 104 each coordinate Mg(2+). The 429-residue stretch at 152–580 folds into the Topo IA-type catalytic domain; it reads FQHLYEAALA…EMKAFTQSIV (429 aa). The segment at 186 to 191 is interaction with DNA; it reads SLGRVQ. The active-site O-(5'-phospho-DNA)-tyrosine intermediate is the tyrosine 305. The interval 672-699 is disordered; it reads KRFKNKSSGKVSKKEMKKYMNNEDSLEN. The segment covering 683–692 has biased composition (basic and acidic residues); that stretch reads SKKEMKKYMN.

The protein belongs to the type IA topoisomerase family. It depends on Mg(2+) as a cofactor.

It catalyses the reaction ATP-independent breakage of single-stranded DNA, followed by passage and rejoining.. In terms of biological role, releases the supercoiling and torsional tension of DNA, which is introduced during the DNA replication and transcription, by transiently cleaving and rejoining one strand of the DNA duplex. Introduces a single-strand break via transesterification at a target site in duplex DNA. The scissile phosphodiester is attacked by the catalytic tyrosine of the enzyme, resulting in the formation of a DNA-(5'-phosphotyrosyl)-enzyme intermediate and the expulsion of a 3'-OH DNA strand. The free DNA strand then undergoes passage around the unbroken strand, thus removing DNA supercoils. Finally, in the religation step, the DNA 3'-OH attacks the covalent intermediate to expel the active-site tyrosine and restore the DNA phosphodiester backbone. The sequence is that of DNA topoisomerase 3 from Staphylococcus haemolyticus (strain JCSC1435).